A 221-amino-acid polypeptide reads, in one-letter code: Peptide methionine sulfoxide reductase MsrA (221 aa).

Cysteine 54 is a catalytic residue.

It belongs to the MsrA Met sulfoxide reductase family.

The enzyme catalyses L-methionyl-[protein] + [thioredoxin]-disulfide + H2O = L-methionyl-(S)-S-oxide-[protein] + [thioredoxin]-dithiol. It catalyses the reaction [thioredoxin]-disulfide + L-methionine + H2O = L-methionine (S)-S-oxide + [thioredoxin]-dithiol. Has an important function as a repair enzyme for proteins that have been inactivated by oxidation. Catalyzes the reversible oxidation-reduction of methionine sulfoxide in proteins to methionine. The sequence is that of Peptide methionine sulfoxide reductase MsrA from Methylobacterium nodulans (strain LMG 21967 / CNCM I-2342 / ORS 2060).